We begin with the raw amino-acid sequence, 360 residues long: G-protein coupled receptor 15 (360 aa).

The Extracellular segment spans residues 1 to 33 (MDPEETSVYLDYYYATSPNPDIRETHSHVPYTS). A helical membrane pass occupies residues 34 to 54 (VFLPVFYTAVFLTGVLGNLVL). Residues 55–69 (MGALHFKPGSRRLID) lie on the Cytoplasmic side of the membrane. The chain crosses the membrane as a helical span at residues 70–90 (IFIINLAASDFIFLVTLPLWV). Residues 91–120 (DKEASLGLWRTGSFLCKGSSYMISVNMHCS) lie on the Extracellular side of the membrane. The chain crosses the membrane as a helical span at residues 121-141 (VFLLTCMSVDRYLAIVCPVVS). Topologically, residues 142-149 (RKFRRTDC) are cytoplasmic. Residues 150 to 170 (AYVVCASIWFISCLLGLPTLL) form a helical membrane-spanning segment. The Extracellular portion of the chain corresponds to 171–192 (SRELTLIDDKPYCAEKKATPLK). A helical transmembrane segment spans residues 193-213 (LIWSLVALIFTFFVPLLSIVT). At 214 to 239 (CYCCIARKLCAHYQQSGKHNKKLKKS) the chain is on the cytoplasmic side. Residues 240–260 (IKIIFIVVAAFLVSWLPFNTF) traverse the membrane as a helical segment. The Extracellular portion of the chain corresponds to 261 to 284 (KLLAIVSGLQQERYFPSAMLQLGM). The chain crosses the membrane as a helical span at residues 285–305 (EVSGPLAFANSCVNPFIYYIF). Topologically, residues 306–360 (DSYIRRAIVHCLCPCLKNYDFGSSTETSDSHLTKALSTFIHAEDFTRRRKRSVSL) are cytoplasmic. Serine 359 bears the Phosphoserine mark.

This sequence belongs to the G-protein coupled receptor 1 family. In terms of assembly, interacts with adapter YWHAE; this interaction promotes ER-to-Golgi transport of GPR15. In terms of processing, phosphorylation is necessary for YWHAE binding and efficient surface expression. Post-translationally, O-glycosylated. Sialylated O-glycans in the N-terminal tail inhibits binding of GPR15LG. Sulfation is required for efficient binding of GPR15LG.

It is found in the cell membrane. Its function is as follows. G protein-coupled receptor that plays an important role in immune homeostasis. Acts via its natural ligand GPR15LG, a chemokine-like polypeptide strongly expressed in gastrointestinal tissues. GPR15-GPR15LG signaling axis regulates intestinal homeostasis and inflammation through the migration of immune cells. Controls thereby the specific homing of T-cells, particularly FOXP3+ regulatory T-cells (Tregs), to the large intestine lamina propria. Also required for skin localization of thymus-derived dendritic epidermal T-cells. Plays an important role in mediating cytoprotective function as well as angiogenesis of thrombomodulin. Mechanistically, preferentially signals through the Gi/o pathway to inhibit adenylate cyclase activity and activate a phosphatidylinositol-calcium second messenger system that regulates the release of Ca(2+) ions from intracellular stores. In Macaca mulatta (Rhesus macaque), this protein is G-protein coupled receptor 15 (GPR15).